The chain runs to 209 residues: Large ribosomal subunit protein uL3c (209 aa).

Residues 132 to 154 (PMSHGSKNHRLPGSIGAGSTPGR) form a disordered region.

This sequence belongs to the universal ribosomal protein uL3 family. Part of the 50S ribosomal subunit.

It localises to the plastid. It is found in the cyanelle. In terms of biological role, one of the primary rRNA binding proteins, it binds directly near the 3'-end of the 23S rRNA, where it nucleates assembly of the 50S subunit. This Cyanophora paradoxa protein is Large ribosomal subunit protein uL3c (rpl3).